Consider the following 614-residue polypeptide: Putative N(6)-adenosine-methyltransferase MT-A70-like (614 aa).

A disordered region spans residues 59–78; that stretch reads TPPLTNFNPPKSSSLQQLPQ. Low complexity predominate over residues 67–78; the sequence is PPKSSSLQQLPQ. Residues 391-392 and D409 contribute to the S-adenosyl-L-methionine site; that span reads DI. Residues 479 to 492 form a positively charged region required for RNA-binding region; it reads RIIRTGRTGHWLNH. Residues K526, 549–552, and 562–563 each bind S-adenosyl-L-methionine; these read RMHN and NQ. The interval 589 to 614 is disordered; the sequence is PASPSRASAMELDSSVAAQTTTSAMM. The span at 604 to 614 shows a compositional bias: polar residues; the sequence is VAAQTTTSAMM.

It belongs to the MT-A70-like family.

The protein resides in the nucleus. The catalysed reaction is an adenosine in mRNA + S-adenosyl-L-methionine = an N(6)-methyladenosine in mRNA + S-adenosyl-L-homocysteine + H(+). Its function is as follows. Putative N6-methyltransferase that methylates adenosine residues of some mRNAs. N6-methyladenosine (m6A), which is present at internal sites of some mRNAs, may play a role in the efficiency of mRNA splicing, transport or translation. The polypeptide is Putative N(6)-adenosine-methyltransferase MT-A70-like (Medicago truncatula (Barrel medic)).